A 480-amino-acid polypeptide reads, in one-letter code: Uridine 5'-monophosphate synthase (480 aa).

The residue at position 2 (Ala-2) is an N-acetylalanine. The OPRTase stretch occupies residues 2–214 (AAVGAALGPL…VFVAANHNGS (213 aa)). Tyr-37 carries the post-translational modification Phosphotyrosine. Position 214 is a phosphoserine (Ser-214). A domain linker region spans residues 215 to 220 (PLSIKE). Residues 221-480 (APKELSFSAR…WEAYLSRLGV (260 aa)) are OMPdecase. Residue Ser-257 participates in orotidine 5'-phosphate binding. UMP is bound by residues Ser-257, Asp-259, and 281 to 283 (KTH). Orotidine 5'-phosphate is bound by residues Lys-281, Lys-314, Asp-317, Thr-321, Ser-372, 430–432 (QQY), and 450–451 (GR). Catalysis depends on for OMPdecase activity residues Lys-314 and Asp-317. UMP-binding positions include Asp-317, Thr-321, Ser-372, 430-432 (QQY), and 450-451 (GR).

It in the N-terminal section; belongs to the purine/pyrimidine phosphoribosyltransferase family. The protein in the C-terminal section; belongs to the OMP decarboxylase family. As to quaternary structure, homodimer; dimerization is required for enzymatic activity.

It carries out the reaction orotidine 5'-phosphate + diphosphate = orotate + 5-phospho-alpha-D-ribose 1-diphosphate. It catalyses the reaction orotidine 5'-phosphate + H(+) = UMP + CO2. It functions in the pathway pyrimidine metabolism; UMP biosynthesis via de novo pathway; UMP from orotate: step 1/2. The protein operates within pyrimidine metabolism; UMP biosynthesis via de novo pathway; UMP from orotate: step 2/2. Bifunctional enzyme catalyzing the last two steps of de novo pyrimidine biosynthesis, orotate phosphoribosyltransferase (OPRT), which converts orotate to orotidine-5'-monophosphate (OMP), and orotidine-5'-monophosphate decarboxylase (ODC), the terminal enzymatic reaction that decarboxylates OMP to uridine monophosphate (UMP). The protein is Uridine 5'-monophosphate synthase (UMPS) of Pongo abelii (Sumatran orangutan).